The primary structure comprises 108 residues: ATP synthase peripheral stalk subunit F6, mitochondrial (108 aa).

A mitochondrion-targeting transit peptide spans M1–F32. K41, K46, and K79 each carry N6-acetyllysine. An N6-acetyllysine; alternate mark is found at K84 and K99. N6-succinyllysine; alternate occurs at positions 84 and 99. K105 carries the post-translational modification N6-acetyllysine. S108 bears the Phosphoserine mark.

The protein belongs to the eukaryotic ATPase subunit F6 family. Component of the ATP synthase complex composed at least of ATP5F1A/subunit alpha, ATP5F1B/subunit beta, ATP5MC1/subunit c (homooctomer), MT-ATP6/subunit a, MT-ATP8/subunit 8, ATP5ME/subunit e, ATP5MF/subunit f, ATP5MG/subunit g, ATP5MK/subunit k, ATP5MJ/subunit j, ATP5F1C/subunit gamma, ATP5F1D/subunit delta, ATP5F1E/subunit epsilon, ATP5PF/subunit F6, ATP5PB/subunit b, ATP5PD/subunit d, ATP5PO/subunit OSCP. ATP synthase complex consists of a soluble F(1) head domain (subunits alpha(3) and beta(3)) - the catalytic core - and a membrane F(0) domain - the membrane proton channel (subunits c, a, 8, e, f, g, k and j). These two domains are linked by a central stalk (subunits gamma, delta, and epsilon) rotating inside the F1 region and a stationary peripheral stalk (subunits F6, b, d, and OSCP).

It localises to the mitochondrion. It is found in the mitochondrion inner membrane. Subunit F6, of the mitochondrial membrane ATP synthase complex (F(1)F(0) ATP synthase or Complex V) that produces ATP from ADP in the presence of a proton gradient across the membrane which is generated by electron transport complexes of the respiratory chain. ATP synthase complex consist of a soluble F(1) head domain - the catalytic core - and a membrane F(1) domain - the membrane proton channel. These two domains are linked by a central stalk rotating inside the F(1) region and a stationary peripheral stalk. During catalysis, ATP synthesis in the catalytic domain of F(1) is coupled via a rotary mechanism of the central stalk subunits to proton translocation. In vivo, can only synthesize ATP although its ATP hydrolase activity can be activated artificially in vitro. Part of the complex F(0) domain. Part of the complex F(0) domain and the peripheric stalk, which acts as a stator to hold the catalytic alpha(3)beta(3) subcomplex and subunit a/ATP6 static relative to the rotary elements. The sequence is that of ATP synthase peripheral stalk subunit F6, mitochondrial from Rattus norvegicus (Rat).